The sequence spans 466 residues: Phytase A (466 aa).

The first 19 residues, 1 to 19, serve as a signal peptide directing secretion; that stretch reads MAVLSVLLPITFLLSSVTG. A disulfide bridge links C30 with C39. 1D-myo-inositol hexakisphosphate-binding residues include Q49, Y50, R80, H81, R84, and T87. 4 disulfides stabilise this stretch: C70-C413, C214-C464, C263-C281, and C435-C443. The active-site Nucleophile is H81. N-linked (GlcNAc...) asparagine glycans are attached at residues N104 and N119. Residue R164 participates in 1D-myo-inositol hexakisphosphate binding. Residues N206 and N219 are each glycosylated (N-linked (GlcNAc...) asparagine). K300 serves as a coordination point for 1D-myo-inositol hexakisphosphate. N338 and N351 each carry an N-linked (GlcNAc...) asparagine glycan. Residues H360 and D361 each contribute to the 1D-myo-inositol hexakisphosphate site. N-linked (GlcNAc...) asparagine glycosylation is present at N375.

The protein belongs to the histidine acid phosphatase family. Monomer.

It is found in the secreted. It catalyses the reaction 1D-myo-inositol hexakisphosphate + H2O = 1D-myo-inositol 1,2,4,5,6-pentakisphosphate + phosphate. The enzyme catalyses 1D-myo-inositol 1,2,4,5,6-pentakisphosphate + H2O = 1D-myo-inositol 1,2,5,6-tetrakisphosphate + phosphate. It carries out the reaction 1D-myo-inositol 1,2,5,6-tetrakisphosphate + H2O = 1D-myo-inositol 1,2,6-trisphosphate + phosphate. The catalysed reaction is 1D-myo-inositol 1,2,6-trisphosphate + H2O = 1D-myo-inositol 1,2-bisphosphate + phosphate. It catalyses the reaction 1D-myo-inositol 1,2-bisphosphate + H2O = 1D-myo-inositol 2-phosphate + phosphate. Functionally, catalyzes the phosphate monoester hydrolysis of phytic acid (myo-inositol hexakisphosphate), which results in the stepwise formation of myo-inositol pentakis-, tetrakis-, tris-, bis-, and monophosphates, as well as the liberation of inorganic phosphate. Myo-inositol 2-monophosphate is the end product. This Aspergillus oryzae (strain ATCC 42149 / RIB 40) (Yellow koji mold) protein is Phytase A (phyA).